We begin with the raw amino-acid sequence, 208 residues long: FMN-dependent NADH:quinone oxidoreductase 3 (208 aa).

The protein belongs to the azoreductase type 1 family. In terms of assembly, homodimer. It depends on FMN as a cofactor.

The catalysed reaction is 2 a quinone + NADH + H(+) = 2 a 1,4-benzosemiquinone + NAD(+). It catalyses the reaction N,N-dimethyl-1,4-phenylenediamine + anthranilate + 2 NAD(+) = 2-(4-dimethylaminophenyl)diazenylbenzoate + 2 NADH + 2 H(+). Functionally, quinone reductase that provides resistance to thiol-specific stress caused by electrophilic quinones. Its function is as follows. Also exhibits azoreductase activity. Catalyzes the reductive cleavage of the azo bond in aromatic azo compounds to the corresponding amines. In Bacillus cereus (strain ATCC 14579 / DSM 31 / CCUG 7414 / JCM 2152 / NBRC 15305 / NCIMB 9373 / NCTC 2599 / NRRL B-3711), this protein is FMN-dependent NADH:quinone oxidoreductase 3.